Consider the following 221-residue polypeptide: Flavin-dependent thymidylate synthase (221 aa).

Residues 9 to 209 (GFVKLLDHMG…PWTYESFIRY (201 aa)) form the ThyX domain. FAD-binding positions include serine 55, 78–80 (RHR), and glutamate 86. DUMP is bound by residues 75–78 (QWMR), 86–90 (ELSGR), and arginine 148. The short motif at 78-88 (RHRIASYNELS) is the ThyX motif element. FAD is bound by residues 164–166 (NAR) and asparagine 170. Residue arginine 175 participates in dUMP binding. Arginine 175 serves as the catalytic Involved in ionization of N3 of dUMP, leading to its activation.

It belongs to the thymidylate synthase ThyX family. As to quaternary structure, homotetramer. Requires FAD as cofactor.

It carries out the reaction dUMP + (6R)-5,10-methylene-5,6,7,8-tetrahydrofolate + NADPH + H(+) = dTMP + (6S)-5,6,7,8-tetrahydrofolate + NADP(+). It functions in the pathway pyrimidine metabolism; dTTP biosynthesis. Functionally, catalyzes the reductive methylation of 2'-deoxyuridine-5'-monophosphate (dUMP) to 2'-deoxythymidine-5'-monophosphate (dTMP) while utilizing 5,10-methylenetetrahydrofolate (mTHF) as the methyl donor, and NADPH and FADH(2) as the reductant. In Pseudothermotoga lettingae (strain ATCC BAA-301 / DSM 14385 / NBRC 107922 / TMO) (Thermotoga lettingae), this protein is Flavin-dependent thymidylate synthase.